We begin with the raw amino-acid sequence, 360 residues long: G-protein coupled receptor 15 (360 aa).

Residues 1 to 33 (MDPEETSVYLDYYYATSPNPDIRETHSHVPYTS) are Extracellular-facing. A helical membrane pass occupies residues 34 to 54 (VFLPVFYTAVFLTGVLGNLVL). Over 55–69 (MGALHFKPGSRRLID) the chain is Cytoplasmic. A helical transmembrane segment spans residues 70 to 90 (IFIINLAASDFIFLVTLPLWV). Residues 91 to 120 (DKEASLGLWRTGSFLCKGSSYMISVNMHCS) are Extracellular-facing. The chain crosses the membrane as a helical span at residues 121 to 141 (VFLLTCMSVDRYLAIVCPVVS). The Cytoplasmic segment spans residues 142–149 (RKFRRTDC). Residues 150-170 (AYVVCASIWFISCLLGLPTLL) form a helical membrane-spanning segment. Residues 171 to 192 (SRELTLIDDKPYCAEKKATPLK) are Extracellular-facing. The chain crosses the membrane as a helical span at residues 193–213 (LIWSLVALIFTFFVPLLSIVT). Over 214-239 (CYCCIARKLCAHYQQSGKHNKKLKKS) the chain is Cytoplasmic. The helical transmembrane segment at 240-260 (IKIIFIVVAAFLVSWLPFNTF) threads the bilayer. Topologically, residues 261 to 284 (KLLAIVSGLQQERYFPSAMLQLGM) are extracellular. Residues 285-305 (EVSGPLAFANSCVNPFIYYIF) form a helical membrane-spanning segment. At 306 to 360 (DSYIRRAIVHCLCPCLKNYDFGSSTETSDSHLTKALSTFIHAEDFTRRRKRSVSL) the chain is on the cytoplasmic side. Phosphoserine is present on Ser-359.

The protein belongs to the G-protein coupled receptor 1 family. In terms of assembly, interacts with adapter YWHAE; this interaction promotes ER-to-Golgi transport of GPR15. In terms of processing, phosphorylation is necessary for YWHAE binding and efficient surface expression. Post-translationally, O-glycosylated. Sialylated O-glycans in the N-terminal tail inhibits binding of GPR15LG. Sulfation is required for efficient binding of GPR15LG.

The protein localises to the cell membrane. Functionally, g protein-coupled receptor that plays an important role in immune homeostasis. Acts via its natural ligand GPR15LG, a chemokine-like polypeptide strongly expressed in gastrointestinal tissues. GPR15-GPR15LG signaling axis regulates intestinal homeostasis and inflammation through the migration of immune cells. Controls thereby the specific homing of T-cells, particularly FOXP3+ regulatory T-cells (Tregs), to the large intestine lamina propria. Also required for skin localization of thymus-derived dendritic epidermal T-cells. Plays an important role in mediating cytoprotective function as well as angiogenesis of thrombomodulin. Mechanistically, preferentially signals through the Gi/o pathway to inhibit adenylate cyclase activity and activate a phosphatidylinositol-calcium second messenger system that regulates the release of Ca(2+) ions from intracellular stores. In Macaca mulatta (Rhesus macaque), this protein is G-protein coupled receptor 15 (GPR15).